A 509-amino-acid polypeptide reads, in one-letter code: UDP-N-acetylmuramoylalanine--D-glutamate ligase (509 aa).

ATP is bound at residue 116–122 (GTNGKST).

The protein belongs to the MurCDEF family.

Its subcellular location is the cytoplasm. The catalysed reaction is UDP-N-acetyl-alpha-D-muramoyl-L-alanine + D-glutamate + ATP = UDP-N-acetyl-alpha-D-muramoyl-L-alanyl-D-glutamate + ADP + phosphate + H(+). The protein operates within cell wall biogenesis; peptidoglycan biosynthesis. Its function is as follows. Cell wall formation. Catalyzes the addition of glutamate to the nucleotide precursor UDP-N-acetylmuramoyl-L-alanine (UMA). The chain is UDP-N-acetylmuramoylalanine--D-glutamate ligase from Wolbachia pipientis wMel.